A 320-amino-acid polypeptide reads, in one-letter code: L-lactate dehydrogenase 1 (320 aa).

NAD(+)-binding positions include V18, D39, R44, Y69, and 83–84 (GA). Residues Q86 and R92 each coordinate substrate. NAD(+) contacts are provided by residues S105, 122-124 (AAN), and S147. 124 to 127 (NPVD) contacts substrate. Substrate is bound at residue 152 to 155 (DSSR). H179 (proton acceptor) is an active-site residue. A Phosphotyrosine modification is found at Y223. T232 lines the substrate pocket.

Belongs to the LDH/MDH superfamily. LDH family. As to quaternary structure, homotetramer.

It localises to the cytoplasm. It carries out the reaction (S)-lactate + NAD(+) = pyruvate + NADH + H(+). It participates in fermentation; pyruvate fermentation to lactate; (S)-lactate from pyruvate: step 1/1. Catalyzes the conversion of lactate to pyruvate. This is L-lactate dehydrogenase 1 from Lactiplantibacillus plantarum (strain ATCC BAA-793 / NCIMB 8826 / WCFS1) (Lactobacillus plantarum).